Consider the following 298-residue polypeptide: Nucleotide-binding protein Csal_2229 (298 aa).

8 to 15 contacts ATP; sequence GRSGSGKS. GTP is bound at residue 59-62; that stretch reads DARN.

This sequence belongs to the RapZ-like family.

Functionally, displays ATPase and GTPase activities. The sequence is that of Nucleotide-binding protein Csal_2229 from Chromohalobacter salexigens (strain ATCC BAA-138 / DSM 3043 / CIP 106854 / NCIMB 13768 / 1H11).